Reading from the N-terminus, the 289-residue chain is F-actin-capping protein subunit beta (289 aa).

Positions 73 to 110 are disordered; it reads RSPWSNQFDPPLEGGNQGGSGGDGEGDGGEGGAAGSIM. Residues 87 to 106 show a composition bias toward gly residues; the sequence is GNQGGSGGDGEGDGGEGGAA.

Belongs to the F-actin-capping protein beta subunit family. In terms of assembly, component of the F-actin capping complex, composed of a heterodimer of an alpha and a beta subunit.

It is found in the cytoplasm. The protein localises to the cytoskeleton. The protein resides in the actin patch. Its function is as follows. F-actin-capping proteins bind in a Ca(2+)-independent manner to the fast growing ends of actin filaments (barbed end) thereby blocking the exchange of subunits at these ends. Unlike other capping proteins (such as gelsolin and severin), these proteins do not sever actin filaments. This Neurospora crassa (strain ATCC 24698 / 74-OR23-1A / CBS 708.71 / DSM 1257 / FGSC 987) protein is F-actin-capping protein subunit beta (fac-2).